A 242-amino-acid polypeptide reads, in one-letter code: 1-(5-phosphoribosyl)-5-[(5-phosphoribosylamino)methylideneamino] imidazole-4-carboxamide isomerase (242 aa).

The active-site Proton acceptor is D8. Residue D129 is the Proton donor of the active site.

This sequence belongs to the HisA/HisF family.

Its subcellular location is the cytoplasm. The catalysed reaction is 1-(5-phospho-beta-D-ribosyl)-5-[(5-phospho-beta-D-ribosylamino)methylideneamino]imidazole-4-carboxamide = 5-[(5-phospho-1-deoxy-D-ribulos-1-ylimino)methylamino]-1-(5-phospho-beta-D-ribosyl)imidazole-4-carboxamide. It participates in amino-acid biosynthesis; L-histidine biosynthesis; L-histidine from 5-phospho-alpha-D-ribose 1-diphosphate: step 4/9. This chain is 1-(5-phosphoribosyl)-5-[(5-phosphoribosylamino)methylideneamino] imidazole-4-carboxamide isomerase, found in Beijerinckia indica subsp. indica (strain ATCC 9039 / DSM 1715 / NCIMB 8712).